Consider the following 1044-residue polypeptide: Pre-mRNA-splicing factor ATP-dependent RNA helicase DEAH1 (1044 aa).

The disordered stretch occupies residues 106-206 (EVVVEKKSSV…TLSKKEKEEA (101 aa)). Residues 108 to 121 (VVEKKSSVSESRKS) are compositionally biased toward basic and acidic residues. The span at 122–132 (DKGKKRFRKKS) shows a compositional bias: basic residues. Phosphoserine occurs at positions 135 and 138. Residues 157–166 (EEDDGSESEE) are compositionally biased toward acidic residues. A compositionally biased stretch (basic and acidic residues) spans 167–206 (ERVRDQKEREELEQHLKDRDTARTRKLTEQTLSKKEKEEA). The region spanning 414 to 577 (LKAVEEHQVL…FDTAPIFSFP (164 aa)) is the Helicase ATP-binding domain. 427–434 (GDTGSGKT) is an ATP binding site. The DEAH box signature appears at 524 to 527 (DEAH). Residues 600 to 775 (IVTILTIHVR…SVVLALKSLG (176 aa)) enclose the Helicase C-terminal domain.

It belongs to the DEAD box helicase family. DEAH subfamily. PRP2 sub-subfamily. As to expression, widely expressed.

It carries out the reaction ATP + H2O = ADP + phosphate + H(+). In terms of biological role, involved in pre-mRNA splicing. The protein is Pre-mRNA-splicing factor ATP-dependent RNA helicase DEAH1 of Arabidopsis thaliana (Mouse-ear cress).